We begin with the raw amino-acid sequence, 171 residues long: HTH-type transcriptional regulator AldR (171 aa).

Residues 1–14 (MSEGSSITGVQTPG) are compositionally biased toward polar residues. The interval 1-21 (MSEGSSITGVQTPGSPKDVRA) is disordered. The HTH asnC-type domain occupies 24–85 (LDDIDRRILL…DIDPAAVGLG (62 aa)). The segment at residues 43–62 (NSALAEMVGIAPSTCHGRVR) is a DNA-binding region (H-T-H motif).

As to quaternary structure, homodimer in the absence of L-alanine. Homooctamer in the presence of L-alanine. Homotetramers in the presence of L-cysteine.

With respect to regulation, in the presence of alanine, AldR changes its quaternary structure from a homodimer to an octamer with an open-ring conformation. The binding affinity of AldR for the ald control region is increased significantly by L-alanine. In vitro, L-cysteine also increases the binding affinity of AldR for the target DNA. Its function is as follows. Transcriptional regulator that might play a role under hypoxic conditions. Regulates the expression of ald, which encodes L-alanine dehydrogenase. Serves as both an activator for ald expression in the presence of L-alanine and a repressor in the absence of L-alanine. Acts by binding directly to the upstream region of the ald gene. Four AldR-binding sites (O2, O1, O4 and O3) were identified upstream of the ald gene. O2, O1 and O4 are required for the induction of ald expression by alanine, while O3 is directly involved in the repression of ald expression, by occluding the access of RNA polymerase to the ald promoter. In addition to O3, both O1 and O4 are also necessary for full repression of ald expression in the absence of alanine. The protein is HTH-type transcriptional regulator AldR of Mycolicibacterium smegmatis (strain ATCC 700084 / mc(2)155) (Mycobacterium smegmatis).